Here is a 347-residue protein sequence, read N- to C-terminus: UDP-3-O-acylglucosamine N-acyltransferase (347 aa).

Residue H241 is the Proton acceptor of the active site.

Belongs to the transferase hexapeptide repeat family. LpxD subfamily. In terms of assembly, homotrimer.

The enzyme catalyses a UDP-3-O-[(3R)-3-hydroxyacyl]-alpha-D-glucosamine + a (3R)-hydroxyacyl-[ACP] = a UDP-2-N,3-O-bis[(3R)-3-hydroxyacyl]-alpha-D-glucosamine + holo-[ACP] + H(+). The protein operates within bacterial outer membrane biogenesis; LPS lipid A biosynthesis. Its function is as follows. Catalyzes the N-acylation of UDP-3-O-acylglucosamine using 3-hydroxyacyl-ACP as the acyl donor. Is involved in the biosynthesis of lipid A, a phosphorylated glycolipid that anchors the lipopolysaccharide to the outer membrane of the cell. This Nitrosococcus oceani (strain ATCC 19707 / BCRC 17464 / JCM 30415 / NCIMB 11848 / C-107) protein is UDP-3-O-acylglucosamine N-acyltransferase.